A 395-amino-acid polypeptide reads, in one-letter code: Zinc-regulated GTPase metalloprotein activator 1A (395 aa).

The interval 1 to 22 (MLPAVGSADEEEDPAEEDCPEL) is disordered. Positions 8-20 (ADEEEDPAEEDCP) are enriched in acidic residues. A psi-PxLVp motif motif is present at residues 17–24 (EDCPELVP). 49-56 (GYLGAGKT) is a GTP binding site. Residues Cys-107, Cys-109, and Cys-110 each contribute to the Zn(2+) site. Residues 107–110 (CLCC) carry the CXCC motif motif. Residues 110 to 114 (CSVKD) and 203 to 206 (NKTD) contribute to the GTP site. Residues 274 to 377 (IVTITFEVPG…ILKQLFIATV (104 aa)) form the CobW C-terminal domain.

This sequence belongs to the SIMIBI class G3E GTPase family. ZNG1 subfamily. In terms of tissue distribution, ubiquitously expressed. Up-regulated in cultured astrocytes treated with dopamine.

It localises to the nucleus. It catalyses the reaction GTP + H2O = GDP + phosphate + H(+). Zinc chaperone that directly transfers zinc cofactor to target metalloproteins, thereby activating them. Catalyzes zinc insertion into the active site of methionine aminopeptidase METAP1, which function to cleave the initiator methionine from polypeptides during or after protein translation. Mechanistically, the N-terminal psi-PxLVp motif binds to the C6H2-type zinc finger of inactive form of METAP1. After formation of the docked complex, zinc is transferred from the CXCC motif in the GTPase domain of ZNG1A to the zinc binding site in the peptidase domain of METAP1 in a process requiring GTP hydrolysis. GTP/GDP exchange is required for release of active METAP1. The sequence is that of Zinc-regulated GTPase metalloprotein activator 1A from Homo sapiens (Human).